The following is a 277-amino-acid chain: Energy-coupling factor transporter ATP-binding protein EcfA (277 aa).

The ABC transporter domain occupies 4 to 238 (LETRDLTHIY…PELLTQTRLD (235 aa)). 37-44 (GPNGAGKS) lines the ATP pocket.

It belongs to the ABC transporter superfamily. Energy-coupling factor EcfA family. Forms a stable energy-coupling factor (ECF) transporter complex composed of 2 membrane-embedded substrate-binding proteins (S component), 2 ATP-binding proteins (A component) and 2 transmembrane proteins (T component).

It is found in the cell membrane. Its function is as follows. ATP-binding (A) component of a common energy-coupling factor (ECF) ABC-transporter complex. Unlike classic ABC transporters this ECF transporter provides the energy necessary to transport a number of different substrates. The protein is Energy-coupling factor transporter ATP-binding protein EcfA of Methanoculleus marisnigri (strain ATCC 35101 / DSM 1498 / JR1).